Consider the following 340-residue polypeptide: MKNWLNSDLKDNDIVITTRIRLARNIKGIPFPDKLSDDEGRDVVKKIKDTLIVSNDGKENFTCIDLWKNDNNCNAEYLEKHLISKKLIENYNRSAFILNKDETISVMVNEEDHLRLQAITAGLNLEEAYECIDRIDDKIEENLDYAFDEKIGYLTACPTNIGTGMRASVMIHLPALSMNNEMPRILNALSQIGITIRGLWGEGSKAIGSLYQISNQITLGMSENDIISNLKTVVEQIINQENLSREQLMKKYKYELEDKIARSLGILKNSVILDSNECLNLISNVRMGVEIGIINDISKKSLNNLLVNTQRATLQEIYNKELSKKEENIKRALYVRENLR.

Positions 14 to 244 (IVITTRIRLA…EQIINQENLS (231 aa)) constitute a Phosphagen kinase C-terminal domain. Residues 17–21 (TTRIR), His-81, Arg-115, 166–170 (RASVM), and 197–202 (RGLWGE) each bind ATP.

The protein belongs to the ATP:guanido phosphotransferase family.

It catalyses the reaction L-arginyl-[protein] + ATP = N(omega)-phospho-L-arginyl-[protein] + ADP + H(+). Its function is as follows. Catalyzes the specific phosphorylation of arginine residues in proteins. The protein is Protein-arginine kinase of Clostridium acetobutylicum (strain ATCC 824 / DSM 792 / JCM 1419 / IAM 19013 / LMG 5710 / NBRC 13948 / NRRL B-527 / VKM B-1787 / 2291 / W).